Here is a 207-residue protein sequence, read N- to C-terminus: Redox-sensing transcriptional repressor Rex (207 aa).

Positions 17–56 form a DNA-binding region, H-T-H motif; the sequence is IYLRYLSYLQQVEVTTVSSQQMGKNLDVNPAQIRKDLAAF. An NAD(+)-binding site is contributed by 91-96; the sequence is GAGHLG.

It belongs to the transcriptional regulatory Rex family. In terms of assembly, homodimer.

The protein resides in the cytoplasm. Functionally, modulates transcription in response to changes in cellular NADH/NAD(+) redox state. This is Redox-sensing transcriptional repressor Rex from Brevibacillus brevis (strain 47 / JCM 6285 / NBRC 100599).